The chain runs to 185 residues: Ribosome-recycling factor (185 aa).

This sequence belongs to the RRF family.

It is found in the cytoplasm. Its function is as follows. Responsible for the release of ribosomes from messenger RNA at the termination of protein biosynthesis. May increase the efficiency of translation by recycling ribosomes from one round of translation to another. This chain is Ribosome-recycling factor, found in Lactococcus lactis subsp. lactis (strain IL1403) (Streptococcus lactis).